Reading from the N-terminus, the 1241-residue chain is ATP-dependent helicase/nuclease subunit A (1241 aa).

The 474-residue stretch at 12–485 (SQWTDDQWKA…IDLAKNFRSR (474 aa)) folds into the UvrD-like helicase ATP-binding domain. 33 to 40 (AAAGSGKT) serves as a coordination point for ATP. A UvrD-like helicase C-terminal domain is found at 505 to 805 (GEIDYDADAE…RIMTIHKSKG (301 aa)).

It belongs to the helicase family. AddA subfamily. Heterodimer of AddA and AddB/RexB. Mg(2+) is required as a cofactor.

It carries out the reaction Couples ATP hydrolysis with the unwinding of duplex DNA by translocating in the 3'-5' direction.. The enzyme catalyses ATP + H2O = ADP + phosphate + H(+). The heterodimer acts as both an ATP-dependent DNA helicase and an ATP-dependent, dual-direction single-stranded exonuclease. Recognizes the chi site generating a DNA molecule suitable for the initiation of homologous recombination. The AddA nuclease domain is required for chi fragment generation; this subunit has the helicase and 3' -&gt; 5' nuclease activities. This Bacillus thuringiensis subsp. konkukian (strain 97-27) protein is ATP-dependent helicase/nuclease subunit A.